The chain runs to 457 residues: tRNA modification GTPase MnmE (457 aa).

The (6S)-5-formyl-5,6,7,8-tetrahydrofolate site is built by R25, E87, and R126. Residues G223–F377 enclose the TrmE-type G domain. N233 contacts K(+). Residues N233–S238, T252–T258, and D277–G280 contribute to the GTP site. S237 lines the Mg(2+) pocket. The K(+) site is built by T252, I254, and T257. A Mg(2+)-binding site is contributed by T258. Residue K457 coordinates (6S)-5-formyl-5,6,7,8-tetrahydrofolate.

The protein belongs to the TRAFAC class TrmE-Era-EngA-EngB-Septin-like GTPase superfamily. TrmE GTPase family. As to quaternary structure, homodimer. Heterotetramer of two MnmE and two MnmG subunits. K(+) serves as cofactor.

Its subcellular location is the cytoplasm. In terms of biological role, exhibits a very high intrinsic GTPase hydrolysis rate. Involved in the addition of a carboxymethylaminomethyl (cmnm) group at the wobble position (U34) of certain tRNAs, forming tRNA-cmnm(5)s(2)U34. In Streptococcus suis (strain 98HAH33), this protein is tRNA modification GTPase MnmE.